Reading from the N-terminus, the 485-residue chain is Glutamyl-tRNA(Gln) amidotransferase subunit A (485 aa).

Residues lysine 78 and serine 153 each act as charge relay system in the active site. Serine 177 functions as the Acyl-ester intermediate in the catalytic mechanism.

It belongs to the amidase family. GatA subfamily. Heterotrimer of A, B and C subunits.

The enzyme catalyses L-glutamyl-tRNA(Gln) + L-glutamine + ATP + H2O = L-glutaminyl-tRNA(Gln) + L-glutamate + ADP + phosphate + H(+). Allows the formation of correctly charged Gln-tRNA(Gln) through the transamidation of misacylated Glu-tRNA(Gln) in organisms which lack glutaminyl-tRNA synthetase. The reaction takes place in the presence of glutamine and ATP through an activated gamma-phospho-Glu-tRNA(Gln). In Bacillus cereus (strain ZK / E33L), this protein is Glutamyl-tRNA(Gln) amidotransferase subunit A.